The following is a 421-amino-acid chain: NAD-specific glutamate dehydrogenase (421 aa).

The substrate site is built by Lys-71 and Lys-95. The Proton donor role is filled by Lys-107. Thr-191 and Asn-222 together coordinate NAD(+). Ser-355 contacts substrate.

Belongs to the Glu/Leu/Phe/Val dehydrogenases family. In terms of assembly, homohexamer.

It catalyses the reaction L-glutamate + NAD(+) + H2O = 2-oxoglutarate + NH4(+) + NADH + H(+). The polypeptide is NAD-specific glutamate dehydrogenase (gluD) (Clostridioides difficile (Peptoclostridium difficile)).